A 489-amino-acid polypeptide reads, in one-letter code: Cytochrome P450 2C70 (489 aa).

The first 27 residues, 1–27 (MALFIFLGIWLSCLVFLFLWNQHHVRR), serve as a signal peptide directing secretion. Cysteine 434 provides a ligand contact to heme.

Belongs to the cytochrome P450 family. The cofactor is heme.

It is found in the endoplasmic reticulum membrane. It localises to the microsome membrane. The catalysed reaction is chenodeoxycholate + reduced [NADPH--hemoprotein reductase] + O2 = alpha-muricholate + oxidized [NADPH--hemoprotein reductase] + H2O + H(+). It carries out the reaction ursodeoxycholate + reduced [NADPH--hemoprotein reductase] + O2 = beta-muricholate + oxidized [NADPH--hemoprotein reductase] + H2O + H(+). A cytochrome P450 monooxygenase involved in muricholic acid (MCA) synthesis. Hydroxylates at the 6-beta position two major bile acids, chenodeoxycholic acid (CDCA) and ursodeoxycholic acid (UDCA) to form alpha-MCA and beta-MCA, respectively. May regulate NR1H4/farnesoid X receptor signaling, as taurine-conjugated MCAs are antagonists of NR1H4. Mechanistically, uses molecular oxygen inserting one oxygen atom into a substrate, and reducing the second into a water molecule, with two electrons provided by NADPH via cytochrome P450 reductase (CPR; NADPH-ferrihemoprotein reductase). The protein is Cytochrome P450 2C70 of Rattus norvegicus (Rat).